The chain runs to 220 residues: Probable L-serine dehydratase, beta chain (220 aa).

In terms of domain architecture, ACT spans 148–220 (AILVVHNDKF…NIIQVTKIAD (73 aa)).

It belongs to the iron-sulfur dependent L-serine dehydratase family. In terms of assembly, heterodimer of an alpha chain and a beta chain. The cofactor is [4Fe-4S] cluster.

It carries out the reaction L-serine = pyruvate + NH4(+). It participates in carbohydrate biosynthesis; gluconeogenesis. The chain is Probable L-serine dehydratase, beta chain (sdaAB) from Bacillus subtilis (strain 168).